Reading from the N-terminus, the 147-residue chain is MTSSAASSPALDDIEEGIALRPKFDAAGLVTCVTTDARSGEVLMVAHMNAEALEKTVQSGEAWYYSRSRKRLWKKGESSGHVQRVLEIRVDCDQDAVWLRVEQAGAACHTGRQSCFYRRIDRDGSGAPLLTMVDADRLFDPAKIYPK.

Position 91 (Asp-91) interacts with Mg(2+). Cys-92 serves as a coordination point for Zn(2+). Residues Asp-93 and Asp-95 each contribute to the Mg(2+) site. Zn(2+)-binding residues include Cys-108 and Cys-115.

It belongs to the PRA-CH family. Homodimer. Requires Mg(2+) as cofactor. Zn(2+) serves as cofactor.

The protein resides in the cytoplasm. It catalyses the reaction 1-(5-phospho-beta-D-ribosyl)-5'-AMP + H2O = 1-(5-phospho-beta-D-ribosyl)-5-[(5-phospho-beta-D-ribosylamino)methylideneamino]imidazole-4-carboxamide. It participates in amino-acid biosynthesis; L-histidine biosynthesis; L-histidine from 5-phospho-alpha-D-ribose 1-diphosphate: step 3/9. Catalyzes the hydrolysis of the adenine ring of phosphoribosyl-AMP. The protein is Phosphoribosyl-AMP cyclohydrolase of Rhodopseudomonas palustris (strain BisB5).